A 213-amino-acid chain; its full sequence is Adenylate kinase (213 aa).

10 to 15 (GSGKGT) is an ATP binding site. The tract at residues 30 to 59 (SVGDLLRNIISSSSELGKKIKGTVESGNLI) is NMP. AMP-binding positions include R36, 57-59 (NLI), 83-86 (GFPR), and Q90. The tract at residues 125 to 160 (NRLACLDCKNIYSVSSFKSTTCAKCKSTRLEKRIDD) is LID. Position 126 (R126) interacts with ATP. Residues C129 and C132 each contribute to the Zn(2+) site. 135–136 (IY) is a binding site for ATP. Zn(2+) contacts are provided by C146 and C149. The AMP site is built by R157 and R169. Residue L195 coordinates ATP.

It belongs to the adenylate kinase family. Monomer.

The protein resides in the cytoplasm. It carries out the reaction AMP + ATP = 2 ADP. It participates in purine metabolism; AMP biosynthesis via salvage pathway; AMP from ADP: step 1/1. Functionally, catalyzes the reversible transfer of the terminal phosphate group between ATP and AMP. Plays an important role in cellular energy homeostasis and in adenine nucleotide metabolism. The chain is Adenylate kinase from Wolbachia pipientis wMel.